Here is a 72-residue protein sequence, read N- to C-terminus: Disintegrin basilicin (72 aa).

Positions 1–72 (AGEECDCGSP…ADCPRNHFHA (72 aa)) constitute a Disintegrin domain. 6 cysteine pairs are disulfide-bonded: cysteine 5–cysteine 20, cysteine 7–cysteine 15, cysteine 14–cysteine 37, cysteine 28–cysteine 34, cysteine 33–cysteine 58, and cysteine 46–cysteine 65. The Cell attachment site motif lies at 50 to 52 (RGD).

It belongs to the venom metalloproteinase (M12B) family. P-II subfamily. P-IIa sub-subfamily. Monomer (disintegrin). In terms of tissue distribution, expressed by the venom gland.

The protein localises to the secreted. Functionally, inhibits fibrinogen interaction with platelets. Acts by binding to alpha-IIb/beta-3 (ITGA2B/ITGB3) on the platelet surface and inhibits aggregation induced by ADP, thrombin, platelet-activating factor and collagen. This is Disintegrin basilicin from Crotalus basiliscus (Mexican west-coast rattlesnake).